The sequence spans 45 residues: MTKRTFGGTSRKRKRVSGFRVRMRSHTGRRVIKSRRQKGRERIAV.

The disordered stretch occupies residues 1-45 (MTKRTFGGTSRKRKRVSGFRVRMRSHTGRRVIKSRRQKGRERIAV). Residues 10–39 (SRKRKRVSGFRVRMRSHTGRRVIKSRRQKG) show a composition bias toward basic residues.

This sequence belongs to the bacterial ribosomal protein bL34 family.

In Prochlorococcus marinus (strain MIT 9301), this protein is Large ribosomal subunit protein bL34.